Reading from the N-terminus, the 465-residue chain is Ribulose bisphosphate carboxylase large chain (465 aa).

The residue at position 4 (K4) is an N6,N6,N6-trimethyllysine. The substrate site is built by N113 and T163. K165 (proton acceptor) is an active-site residue. A substrate-binding site is contributed by K167. K191, D193, and E194 together coordinate Mg(2+). N6-carboxylysine is present on K191. The active-site Proton acceptor is H284. Residues R285, H317, and S369 each coordinate substrate.

It belongs to the RuBisCO large chain family. Type I subfamily. In terms of assembly, heterohexadecamer of 8 large chains and 8 small chains; disulfide-linked. The disulfide link is formed within the large subunit homodimers. It depends on Mg(2+) as a cofactor. Post-translationally, the disulfide bond which can form in the large chain dimeric partners within the hexadecamer appears to be associated with oxidative stress and protein turnover.

It localises to the plastid. The protein resides in the chloroplast. The catalysed reaction is 2 (2R)-3-phosphoglycerate + 2 H(+) = D-ribulose 1,5-bisphosphate + CO2 + H2O. It catalyses the reaction D-ribulose 1,5-bisphosphate + O2 = 2-phosphoglycolate + (2R)-3-phosphoglycerate + 2 H(+). In terms of biological role, ruBisCO catalyzes two reactions: the carboxylation of D-ribulose 1,5-bisphosphate, the primary event in carbon dioxide fixation, as well as the oxidative fragmentation of the pentose substrate in the photorespiration process. Both reactions occur simultaneously and in competition at the same active site. This Ailanthus altissima (Tree-of-heaven) protein is Ribulose bisphosphate carboxylase large chain.